The following is a 381-amino-acid chain: Cell division protein FtsZ (381 aa).

The segment at 1–25 (MKFINDAIKESEKREKPSSSSMNSE) is disordered. Basic and acidic residues predominate over residues 7–17 (AIKESEKREKP). GTP contacts are provided by residues 48-52 (GAGNN), 135-137 (GTG), Glu166, Arg170, and Asp213.

The protein belongs to the FtsZ family. In terms of assembly, homodimer. Polymerizes to form a dynamic ring structure in a strictly GTP-dependent manner. Interacts directly with several other division proteins.

It is found in the cytoplasm. Its function is as follows. Essential cell division protein that forms a contractile ring structure (Z ring) at the future cell division site. The regulation of the ring assembly controls the timing and the location of cell division. One of the functions of the FtsZ ring is to recruit other cell division proteins to the septum to produce a new cell wall between the dividing cells. Binds GTP and shows GTPase activity. In Methanothermobacter thermautotrophicus (strain ATCC 29096 / DSM 1053 / JCM 10044 / NBRC 100330 / Delta H) (Methanobacterium thermoautotrophicum), this protein is Cell division protein FtsZ.